We begin with the raw amino-acid sequence, 219 residues long: 3,4-dihydroxy-2-butanone 4-phosphate synthase (219 aa).

D-ribulose 5-phosphate contacts are provided by residues 37–38 (RE), aspartate 42, 150–154 (RRGHT), and glutamate 174. Mg(2+) is bound at residue glutamate 38. Histidine 153 serves as a coordination point for Mg(2+).

Belongs to the DHBP synthase family. In terms of assembly, homodimer. The cofactor is Mg(2+). Mn(2+) serves as cofactor.

The enzyme catalyses D-ribulose 5-phosphate = (2S)-2-hydroxy-3-oxobutyl phosphate + formate + H(+). The protein operates within cofactor biosynthesis; riboflavin biosynthesis; 2-hydroxy-3-oxobutyl phosphate from D-ribulose 5-phosphate: step 1/1. Its function is as follows. Catalyzes the conversion of D-ribulose 5-phosphate to formate and 3,4-dihydroxy-2-butanone 4-phosphate. The protein is 3,4-dihydroxy-2-butanone 4-phosphate synthase of Edwardsiella ictaluri (strain 93-146).